A 435-amino-acid polypeptide reads, in one-letter code: Histidinol dehydrogenase (435 aa).

3 residues coordinate NAD(+): Tyr-131, Gln-189, and Asn-212. 3 residues coordinate substrate: Ser-238, Gln-260, and His-263. Positions 260 and 263 each coordinate Zn(2+). Catalysis depends on proton acceptor residues Glu-327 and His-328. His-328, Asp-361, Glu-415, and His-420 together coordinate substrate. Asp-361 is a binding site for Zn(2+). Position 420 (His-420) interacts with Zn(2+).

The protein belongs to the histidinol dehydrogenase family. As to quaternary structure, homodimer. Zn(2+) serves as cofactor.

It catalyses the reaction L-histidinol + 2 NAD(+) + H2O = L-histidine + 2 NADH + 3 H(+). It functions in the pathway amino-acid biosynthesis; L-histidine biosynthesis; L-histidine from 5-phospho-alpha-D-ribose 1-diphosphate: step 9/9. Functionally, catalyzes the sequential NAD-dependent oxidations of L-histidinol to L-histidinaldehyde and then to L-histidine. This Buchnera aphidicola subsp. Acyrthosiphon pisum (strain APS) (Acyrthosiphon pisum symbiotic bacterium) protein is Histidinol dehydrogenase (hisD).